The sequence spans 235 residues: Ribosomal RNA small subunit methyltransferase G (235 aa).

S-adenosyl-L-methionine contacts are provided by residues Gly74, Phe79, Glu97–Thr99, Ala125–Glu126, and Arg144.

It belongs to the methyltransferase superfamily. RNA methyltransferase RsmG family.

The protein localises to the cytoplasm. Specifically methylates the N7 position of a guanine in 16S rRNA. The polypeptide is Ribosomal RNA small subunit methyltransferase G (Dehalococcoides mccartyi (strain CBDB1)).